The sequence spans 150 residues: MLQNVIKELYDKGVLIFLDPNNYVTNNVAENPEIFANRDKFLEMYQDPIKIGWIFCYTPSLEEVLSTIKEDTCCLIEFGFNSDTEKKACETGRLLINHLVRHKFMAHWDENAIKNHKISTVITAKDLPESIQDLIVDYAPTTSTNPEQRE.

The protein belongs to the IIV-6 391R family.

This is an uncharacterized protein from Invertebrate iridescent virus 3 (IIV-3).